The sequence spans 373 residues: Sodium-dependent organic anion transporter (373 aa).

Residues 1–15 (MSTDCAGNSTCPVNS) are compositionally biased toward polar residues. The segment at 1–21 (MSTDCAGNSTCPVNSTEEDPP) is disordered. Residues 1-32 (MSTDCAGNSTCPVNSTEEDPPVGMEGHANLKL) lie on the Extracellular side of the membrane. N-linked (GlcNAc...) asparagine glycosylation is found at Asn8 and Asn14. The chain crosses the membrane as a helical span at residues 33-53 (LFTVLSAVMVGLVMFSFGCSV). Residues 54–67 (ESQKLWLHLRRPWG) are Cytoplasmic-facing. Residues 68–88 (IAVGLLSQFGLMPLTAYLLAI) form a helical membrane-spanning segment. Residues 89–97 (GFGLKPFQA) are Extracellular-facing. The helical transmembrane segment at 98 to 118 (IAVLMMGSCPGGTISNVLTFW) threads the bilayer. At 119–126 (VDGDMDLS) the chain is on the cytoplasmic side. Residues 127–147 (ISMTTCSTVAALGMMPLCLYI) form a helical membrane-spanning segment. The Extracellular segment spans residues 148 to 157 (YTRSWTLTQN). Residues 158–178 (LVIPYQSIGITLVSLVVPVAS) form a helical membrane-spanning segment. Residues 179–195 (GVYVNYRWPKQATVILK) are Cytoplasmic-facing. A helical transmembrane segment spans residues 196–216 (VGAILGGMLLLVVAVTGMVLA). Residues 217-224 (KGWNTDVT) lie on the Extracellular side of the membrane. Residues 225-245 (LLVISCIFPLVGHVTGFLLAF) traverse the membrane as a helical segment. Topologically, residues 246 to 265 (LTHQSWQRCRTISIETGAQN) are cytoplasmic. The chain crosses the membrane as a helical span at residues 266-283 (IQLCIAMLQLSFSAEYLV). A topological domain (extracellular) is located at residue Gln284. Residues 285–305 (LLNFALAYGLFQVLHGLLIVA) traverse the membrane as a helical segment. Residues 306–373 (AYQAYKRRQK…ELTSHIPSCE (68 aa)) lie on the Cytoplasmic side of the membrane.

This sequence belongs to the bile acid:sodium symporter (BASS) (TC 2.A.28) family. In terms of processing, glycosylated. In terms of tissue distribution, highest expression in lung and testis, moderate expression in heart, bladder and skin, and low expression in blood, liver, stomach, small intestine, spleen, kidney, adrenal gland, seminal vesicle, preputial gland, coagulating gland, lacrimal gland/eye, and brain.

The protein localises to the membrane. The catalysed reaction is estrone 3-sulfate(out) + 2 Na(+)(out) = estrone 3-sulfate(in) + 2 Na(+)(in). It carries out the reaction 17beta-estradiol 3-sulfate(out) + 2 Na(+)(out) = 17beta-estradiol 3-sulfate(in) + 2 Na(+)(in). The enzyme catalyses dehydroepiandrosterone 3-sulfate(out) + 2 Na(+)(out) = dehydroepiandrosterone 3-sulfate(in) + 2 Na(+)(in). It catalyses the reaction androst-5-ene-diol 3-sulfate(out) + 2 Na(+)(out) = androst-5-ene-diol 3-sulfate(in) + 2 Na(+)(in). The catalysed reaction is pregnenolone sulfate(out) + 2 Na(+)(out) = pregnenolone sulfate(in) + 2 Na(+)(in). It carries out the reaction taurolithocholate 3-sulfate(out) + 2 Na(+)(out) = taurolithocholate 3-sulfate(in) + 2 Na(+)(in). The enzyme catalyses androsterone 3alpha-sulfate(out) + 2 Na(+)(out) = androsterone 3alpha-sulfate(in) + 2 Na(+)(in). It catalyses the reaction 5alpha-dihydrotestosterone sulfate(out) + 2 Na(+)(out) = 5alpha-dihydrotestosterone sulfate(in) + 2 Na(+)(in). The catalysed reaction is 17beta-estradiol 17-sulfate(out) + 2 Na(+)(out) = 17beta-estradiol 17-sulfate(in) + 2 Na(+)(in). It carries out the reaction 17alpha-hydroxypregnenolone 3-sulfate(out) + 2 Na(+)(out) = 17alpha-hydroxypregnenolone 3-sulfate(in) + 2 Na(+)(in). The enzyme catalyses epiandrosterone 3-sulfate(out) + 2 Na(+)(out) = epiandrosterone 3-sulfate(in) + 2 Na(+)(in). It catalyses the reaction epitestosterone 17-sulfate(out) + 2 Na(+)(out) = epitestosterone 17-sulfate(in) + 2 Na(+)(in). The catalysed reaction is testosterone 17-sulfate(out) + 2 Na(+)(out) = testosterone 17-sulfate(in) + 2 Na(+)(in). It carries out the reaction 16alpha-hydroxydehydroepiandrosterone 3-sulfate(out) + 2 Na(+)(out) = 16alpha-hydroxydehydroepiandrosterone 3-sulfate(in) + 2 Na(+)(in). In terms of biological role, transports sulfoconjugated steroid hormones from the extracellular compartment into the cytosol in a sodium-dependent manner without hydrolysis. Steroid sulfate hormones are commonly considered to be biologically inactive metabolites, that may be activated by steroid sulfatases into free steroids. May play an important role by delivering sulfoconjugated steroids to specific target cells in reproductive organs. May play a role transporting the estriol precursor 16alpha-hydroxydehydroepiandrosterone 3-sulfate (16a-OH-DHEAS) at the fetal blood vessel endothelium. Can also transport other sulfoconjugated molecules such as taurolithocholic acid-3-sulfate and sulfoconjugated pyrenes. The protein is Sodium-dependent organic anion transporter (Slc10a6) of Mus musculus (Mouse).